Here is an 85-residue protein sequence, read N- to C-terminus: Prosialokinin (85 aa).

An N-terminal signal peptide occupies residues 1–23; that stretch reads MNMFITVQIVIVLVLAVLSEAAS. A propeptide spanning residues 24–74 is cleaved from the precursor; it reads LPTATERKDAMDEGPNQSDEPEGSVADPSTKDDDYSDSLKQDEKYYKVRLL. The disordered stretch occupies residues 26-61; that stretch reads TATERKDAMDEGPNQSDEPEGSVADPSTKDDDYSDS. Residues 52-61 show a composition bias toward basic and acidic residues; it reads STKDDDYSDS. At methionine 84 the chain carries Methionine amide.

This sequence belongs to the tachykinin family. As to expression, expressed exclusively in the medial lobe of female salivary gland. Not detected in female carcass without head and salivary glands. Not detected in male tissues.

The protein localises to the secreted. Vasodilatory peptide. Facilitates mosquito blood feeding on vertebrate host. Induces nitric oxide (NO) release in blood vessels through the activation of the nitric oxide synthase (NOS3). Enhances endothelial permeability and induces edema at the site of inoculation in the host. Induces host smooth muscle contraction. Down-regulates production of Th1 cytokines, such as IL2 and IFN-gamma (IFNG), in mouse splenocytes. Up-regulates production of Th2 cytokines, such as IL4 and IL10, in mouse splenocytes. Promotes recruitment of host leukocytes, especially neutrophils and CD8+ T cells, to the bite site. Modulates cytokine production by host macrophages. Modulates populations of monocytes/macrophages, plasmacytoid dendritic cells, B cells, CD4+ T cells, NK and NKT cells, shifting mammalian immunity towards Th2 responses. In terms of biological role, (Microbial infection) Promotes Semliki Forest virus infection in the host. Functionally, (Microbial infection) Does not affect Zika virus replication in the host. The polypeptide is Prosialokinin (Aedes aegypti (Yellowfever mosquito)).